The sequence spans 84 residues: Small ribosomal subunit protein bS20 (84 aa).

Belongs to the bacterial ribosomal protein bS20 family.

Binds directly to 16S ribosomal RNA. This Phocaeicola vulgatus (strain ATCC 8482 / DSM 1447 / JCM 5826 / CCUG 4940 / NBRC 14291 / NCTC 11154) (Bacteroides vulgatus) protein is Small ribosomal subunit protein bS20.